Consider the following 268-residue polypeptide: tRNA pseudouridine synthase A (268 aa).

Aspartate 52 functions as the Nucleophile in the catalytic mechanism. Tyrosine 110 is a binding site for substrate.

The protein belongs to the tRNA pseudouridine synthase TruA family. In terms of assembly, homodimer.

It carries out the reaction uridine(38/39/40) in tRNA = pseudouridine(38/39/40) in tRNA. Functionally, formation of pseudouridine at positions 38, 39 and 40 in the anticodon stem and loop of transfer RNAs. In Prochlorococcus marinus (strain MIT 9215), this protein is tRNA pseudouridine synthase A.